The sequence spans 341 residues: Small ribosomal subunit protein uS3 (341 aa).

The KH type-2 domain occupies 38–106; sequence IRRMMTRGME…QVQLNILEVK (69 aa). Disordered regions lie at residues 224–246 and 274–341; these read RAVR…LETA and PAGQ…TKEG. 2 stretches are compositionally biased toward low complexity: residues 285–303 and 311–333; these read AEQP…VTGE and AAPA…DAPS.

This sequence belongs to the universal ribosomal protein uS3 family. Part of the 30S ribosomal subunit. Forms a tight complex with proteins S10 and S14.

In terms of biological role, binds the lower part of the 30S subunit head. Binds mRNA in the 70S ribosome, positioning it for translation. This is Small ribosomal subunit protein uS3 from Acidothermus cellulolyticus (strain ATCC 43068 / DSM 8971 / 11B).